A 156-amino-acid polypeptide reads, in one-letter code: Large ribosomal subunit protein uL22 (156 aa).

Belongs to the universal ribosomal protein uL22 family. Part of the 50S ribosomal subunit.

In terms of biological role, this protein binds specifically to 23S rRNA. It makes multiple contacts with different domains of the 23S rRNA in the assembled 50S subunit and ribosome. Functionally, the globular domain of the protein is located near the polypeptide exit tunnel on the outside of the subunit, while an extended beta-hairpin is found that lines the wall of the exit tunnel in the center of the 70S ribosome. This Sulfolobus acidocaldarius (strain ATCC 33909 / DSM 639 / JCM 8929 / NBRC 15157 / NCIMB 11770) protein is Large ribosomal subunit protein uL22.